A 700-amino-acid chain; its full sequence is MERYVTIASCQLNQWAMDFEGNRLRIIDSIKEAKRQNASLRVGPELEVTGYGCEDHFLESDTYYHSWEMLCSIIHDPDCQDILLDIGMPVMHKAMRHNCRILALNGKILLIRPKIWLCDDGNFRESRWFTPWLRPRVVETHYLPTFVAKSLNQTTVPIGDAILQCNETVVGVETCEELFTPNSPHIDMALDGVEIFINASGSHHELRKLTTRVNLIQNATEKCGGIYLYSNQRGCDGGRLYYDGSSMIFANGKMLAQGHQFSLKDVEVISATVDVDTVRSYRFQPSHGIQGVTRPSYERIHVNFSLSSYQQDYDIYRKPTDPIEVTIPLPEEEITFGPACWLWDYLRRSHAAGFFLPLSGGLDSCSTAVLVYSMCRIVCKAMEEDDAQVLSDVRRIVGDPSYSSTDPKKLLNHLFYTAFMGSEHSSKETRSRAKELSSLIGSYHTDVNIDTMTSAVVKLFALVTGKTPQFRSNGGTNAENLALQNIQARSRMLLGYLFAQLLPWVRGYSGSLLVLGSSNVDECLRGYLTKYDCSSADINPIGGISKTDLKSFLRYAKEALDLPILQEFLDATPTAELEPTTESYVQSDEADMGMTYAELSVFGRLRKISKCGPYSMFTQLMHQWGDRLSPSQVAEKVKRFFHYYGINRHKMTTLTPSYHAETYGVDDNRYDLRQFLYPSWTWQNKKIDALASKFEQHQRK.

A CN hydrolase domain is found at 5 to 275 (VTIASCQLNQ…VEVISATVDV (271 aa)). Glutamate 45 functions as the Proton acceptor; for glutaminase activity in the catalytic mechanism. The active-site For glutaminase activity is the lysine 114. Cysteine 175 (nucleophile; for glutaminase activity) is an active-site residue. The interval 327–700 (IPLPEEEITF…ASKFEQHQRK (374 aa)) is ligase. 357–364 (PLSGGLDS) contacts ATP. Serine 359 is a catalytic residue.

In the C-terminal section; belongs to the NAD synthetase family.

It catalyses the reaction deamido-NAD(+) + L-glutamine + ATP + H2O = L-glutamate + AMP + diphosphate + NAD(+) + H(+). It participates in cofactor biosynthesis; NAD(+) biosynthesis; NAD(+) from deamido-NAD(+) (L-Gln route): step 1/1. This Schizosaccharomyces pombe (strain 972 / ATCC 24843) (Fission yeast) protein is Putative glutamine-dependent NAD(+) synthetase.